Reading from the N-terminus, the 467-residue chain is Nuclear distribution protein PAC1 (467 aa).

Residues 62–96 adopt a coiled-coil conformation; sequence GSIIRLQRAITKLEQKCDALQQELDDKTKQLETIV. WD repeat units lie at residues 121 to 160, 164 to 212, 219 to 262, 264 to 302, 325 to 365, 385 to 424, and 426 to 466; these read QNES…IPLA, AHSK…GELK, AHDS…QSFS, HSEW…SVGT, PYRD…LKPN, GHTS…KTWS, and IHNN…VKII.

The protein belongs to the WD repeat LIS1/nudF family. Self-associates. Interacts with NDL1 and dynein.

The protein resides in the cytoplasm. The protein localises to the cytoskeleton. It localises to the spindle pole. Its function is as follows. Positively regulates the activity of the minus-end directed microtubule motor protein dynein. Plays a central role in positioning the mitotic spindle at the bud neck during cell division. Targets cytoplasmic dynein to microtubule plus ends, thereby promoting dynein-mediated microtubule sliding along the bud cortex and consequently the movement of the mitotic spindle to the bud neck. The protein is Nuclear distribution protein PAC1 of Candida glabrata (strain ATCC 2001 / BCRC 20586 / JCM 3761 / NBRC 0622 / NRRL Y-65 / CBS 138) (Yeast).